The following is a 124-amino-acid chain: Protein S100-A16 (124 aa).

In terms of domain architecture, EF-hand 1; degenerate spans 23-37; the sequence is VSKHSLVKNKISKSS. In terms of domain architecture, EF-hand 2 spans 54–89; it reads GNRKAADKLIQNLDANHDGRICFDEYWTMIGGITSP. 5 residues coordinate Ca(2+): Asp-67, Asn-69, Asp-71, Arg-73, and Glu-78. The interval 97–124 is disordered; the sequence is QECQQESQQECQQESQQESQQESQQGSS.

It belongs to the S-100 family. Homodimer. Interacts with TP53. Ubiquitous. Widely distributed throughout the adult brain and predominantly expressed within specific astrocyte populations. Expressed at high level in adipose tissues of obese animals.

It is found in the nucleus. It localises to the nucleolus. The protein resides in the cytoplasm. Its function is as follows. Calcium-binding protein. Binds one calcium ion per monomer. Can promote differentiation of adipocytes (in vitro). Overexpression in 3T3-L1 preadipocytes increases their proliferation, enhances adipogenesis and reduces insulin-stimulated glucose uptake. The sequence is that of Protein S100-A16 from Mus musculus (Mouse).